We begin with the raw amino-acid sequence, 198 residues long: MAEKENTKRNRREEILQALAQMLESSDGSQRITTAKLAANVGVSEAALYRHFPSKTRMFDSLIEFIEDSLISRINLILQDEKETLNRLRLILLLLLGFAERNPGLTRIMTGHALMFEQDRLQGRINQLYERIEVQLRQVLRERKLREGEAFELDESLLASQLLAFCEGMLSRFVRTEFKYRPTQEFELRWPLLVAQLH.

Positions 9–70 constitute an HTH tetR-type domain; that stretch reads RNRREEILQA…SLIEFIEDSL (62 aa). Positions 33 to 52 form a DNA-binding region, H-T-H motif; it reads TTAKLAANVGVSEAALYRHF. The stretch at 119 to 144 forms a coiled coil; sequence DRLQGRINQLYERIEVQLRQVLRERK.

It belongs to the nucleoid occlusion factor SlmA family. In terms of assembly, homodimer. Interacts with FtsZ.

It is found in the cytoplasm. The protein resides in the nucleoid. Its function is as follows. Required for nucleoid occlusion (NO) phenomenon, which prevents Z-ring formation and cell division over the nucleoid. Acts as a DNA-associated cell division inhibitor that binds simultaneously chromosomal DNA and FtsZ, and disrupts the assembly of FtsZ polymers. SlmA-DNA-binding sequences (SBS) are dispersed on non-Ter regions of the chromosome, preventing FtsZ polymerization at these regions. The chain is Nucleoid occlusion factor SlmA from Sodalis glossinidius (strain morsitans).